The sequence spans 383 residues: Chaperone protein DnaJ (383 aa).

In terms of domain architecture, J spans 5–70 (DYYKTLGVTQ…KKRTAYDQYG (66 aa)). A CR-type zinc finger spans residues 137-215 (GTIKEIKIPT…CHGNGRIEIS (79 aa)). Positions 150, 153, 167, 170, 189, 192, 203, and 206 each coordinate Zn(2+). 4 CXXCXGXG motif repeats span residues 150-157 (CPTCYGYG), 167-174 (CPTCRGNG), 189-196 (CPQCHGEG), and 203-210 (CRRCHGNG).

It belongs to the DnaJ family. Homodimer. The cofactor is Zn(2+).

It is found in the cytoplasm. In terms of biological role, participates actively in the response to hyperosmotic and heat shock by preventing the aggregation of stress-denatured proteins and by disaggregating proteins, also in an autonomous, DnaK-independent fashion. Unfolded proteins bind initially to DnaJ; upon interaction with the DnaJ-bound protein, DnaK hydrolyzes its bound ATP, resulting in the formation of a stable complex. GrpE releases ADP from DnaK; ATP binding to DnaK triggers the release of the substrate protein, thus completing the reaction cycle. Several rounds of ATP-dependent interactions between DnaJ, DnaK and GrpE are required for fully efficient folding. Also involved, together with DnaK and GrpE, in the DNA replication of plasmids through activation of initiation proteins. This Buchnera aphidicola subsp. Baizongia pistaciae (strain Bp) protein is Chaperone protein DnaJ.